The sequence spans 524 residues: Protein-export membrane protein SecD (524 aa).

The next 6 helical transmembrane spans lie at 10-30 (VIFL…PTMG), 366-386 (KFDS…VVFI), 389-409 (GKPQ…YILL), 420-442 (DLSV…IIIA), 465-485 (FWVI…LAVL), and 487-507 (LGDL…GVLV).

It belongs to the SecD/SecF family. SecD subfamily. In terms of assembly, part of the protein translocation apparatus. Forms a homodimer and complexes with SecF.

The protein localises to the cell membrane. Functionally, involved in protein export. This Haloferax volcanii (strain ATCC 29605 / DSM 3757 / JCM 8879 / NBRC 14742 / NCIMB 2012 / VKM B-1768 / DS2) (Halobacterium volcanii) protein is Protein-export membrane protein SecD.